A 460-amino-acid chain; its full sequence is MRSQWVAKRRGQSNVSQMHYARQGMITEEMDYVAKRENLPPDLIRQEVARGRMIIPANINHLNLEPMAIGIASKCKVNANIGASPNSSNLEEEVAKLNLAVKYGADTVMDLSTGGGDLDTIRTAIINASPVPIGTVPIYQAVESVHGNIEKLTPDDFLHIIEKHAQQGVDYMTIHAGLLIEYLPLVRSRLTGIVSRGGGIIAKWMLHHHKQNPLYTHFDEIIEIFKKYDVSFSLGDSLRPGCTHDASDEAQLSELKTLGQLTRRAWEHDVQVMVEGPGHVPMDQIEFNVKKQMEECSEAPFYVLGPLVTDIAPGYDHITSAIGAAMAGWYGTAMLCYVTPKEHLGLPDAEDVRNGLIAYKIAAHAADIARQRPGARDRDDELSKARYNFDWNRQFELSLDPDRAREYHDETLPADIYKTAEFCSMCGPKFCPMQTKVDADALTELEKFLAEQKNKEAIAH.

Substrate-binding positions include N80, M109, Y139, H175, 195–197, 236–239, and E275; these read SRG and DSLR. Zn(2+) is bound at residue H279. Substrate is bound at residue Y302. Zn(2+) is bound at residue H343. C423, C426, and C431 together coordinate [4Fe-4S] cluster.

It belongs to the ThiC family. [4Fe-4S] cluster serves as cofactor.

The catalysed reaction is 5-amino-1-(5-phospho-beta-D-ribosyl)imidazole + S-adenosyl-L-methionine = 4-amino-2-methyl-5-(phosphooxymethyl)pyrimidine + CO + 5'-deoxyadenosine + formate + L-methionine + 3 H(+). Its pathway is cofactor biosynthesis; thiamine diphosphate biosynthesis. Its function is as follows. Catalyzes the synthesis of the hydroxymethylpyrimidine phosphate (HMP-P) moiety of thiamine from aminoimidazole ribotide (AIR) in a radical S-adenosyl-L-methionine (SAM)-dependent reaction. In Rippkaea orientalis (strain PCC 8801 / RF-1) (Cyanothece sp. (strain PCC 8801)), this protein is Phosphomethylpyrimidine synthase.